Here is a 355-residue protein sequence, read N- to C-terminus: Fe-S cluster assembly protein DRE2 (355 aa).

The interval 23 to 156 is N-terminal SAM-like domain; that stretch reads TSFNPRTLLL…KPDYSASVAV (134 aa). Positions 157 to 247 are linker; the sequence is PLRLRRKDNS…EDTLLTEEDM (91 aa). The interval 189-214 is disordered; the sequence is RKSVDMTDDVPEKDVPKVDSPKNDAP. Basic and acidic residues predominate over residues 190–213; sequence KSVDMTDDVPEKDVPKVDSPKNDA. 4 residues coordinate [2Fe-2S] cluster: Cys-257, Cys-268, Cys-271, and Cys-273. The fe-S binding site A stretch occupies residues 257–273; that stretch reads CAPRAGKRRRACKDCTC. Residues Cys-318, Cys-321, Cys-329, and Cys-332 each contribute to the [4Fe-4S] cluster site. 2 short sequence motifs (cx2C motif) span residues 318-321 and 329-332; these read CGNC and CDGC. Positions 318 to 332 are fe-S binding site B; that stretch reads CGNCSLGDAFRCDGC.

The protein belongs to the anamorsin family. In terms of assembly, monomer. Interacts with TAH18. Interacts with MIA40. It depends on [2Fe-2S] cluster as a cofactor. The cofactor is [4Fe-4S] cluster.

The protein localises to the cytoplasm. The protein resides in the mitochondrion intermembrane space. Functionally, component of the cytosolic iron-sulfur (Fe-S) protein assembly (CIA) machinery required for the maturation of extramitochondrial Fe-S proteins. Part of an electron transfer chain functioning in an early step of cytosolic Fe-S biogenesis, facilitating the de novo assembly of a [4Fe-4S] cluster on the scaffold complex CFD1-NBP35. Electrons are transferred to DRE2 from NADPH via the FAD- and FMN-containing protein TAH18. TAH18-DRE2 are also required for the assembly of the diferric tyrosyl radical cofactor of ribonucleotide reductase (RNR), probably by providing electrons for reduction during radical cofactor maturation in the catalytic small subunit RNR2. This is Fe-S cluster assembly protein DRE2 from Botryotinia fuckeliana (strain B05.10) (Noble rot fungus).